We begin with the raw amino-acid sequence, 505 residues long: 6-phosphofructo-2-kinase/fructose-2,6-bisphosphatase 2 (505 aa).

Positions 1–20 (MSGASSSEQNNNSYETKTPN) are disordered. An N-acetylserine modification is found at serine 2. Residues 2-248 (SGASSSEQNN…VYYLMNIHVQ (247 aa)) form a 6-phosphofructo-2-kinase region. Position 29 is a phosphoserine; by PKA (serine 29). Residue 45-53 (GLPARGKTY) coordinates ATP. Beta-D-fructose 6-phosphate is bound by residues arginine 78 and arginine 102. The active site involves aspartate 128. Residues threonine 130 and arginine 136 each contribute to the beta-D-fructose 6-phosphate site. Cysteine 158 is an active-site residue. ATP is bound at residue 167-172 (NILEVK). Positions 172, 193, and 197 each coordinate beta-D-fructose 6-phosphate. Residues 249-505 (PRTIYLCRHG…RAQDMQEGAD (257 aa)) form a fructose-2,6-bisphosphatase region. Arginine 256 provides a ligand contact to beta-D-fructose 2,6-bisphosphate. Histidine 257 acts as the Tele-phosphohistidine intermediate in catalysis. Residues asparagine 263 and glycine 269 each coordinate beta-D-fructose 2,6-bisphosphate. Glutamate 326 serves as the catalytic Proton donor/acceptor. Beta-D-fructose 2,6-bisphosphate contacts are provided by tyrosine 337, arginine 351, lysine 355, tyrosine 366, glutamine 392, and arginine 396. An ATP-binding site is contributed by 348-351 (FALR). ATP-binding positions include 392–396 (QAVMR) and tyrosine 428. The segment at 445 to 505 (HRDKPTNNFP…RAQDMQEGAD (61 aa)) is disordered. A compositionally biased stretch (polar residues) spans 450–476 (TNNFPKNQTPVRMRRNSFTPLSSSNTI). Residue serine 466 is modified to Phosphoserine; by AMPK. Threonine 468 and threonine 475 each carry phosphothreonine. Serine 483 is modified (phosphoserine; by BRAF). Phosphoserine occurs at positions 486 and 493.

The protein in the C-terminal section; belongs to the phosphoglycerate mutase family. Homodimer. Forms a heterodimer with PFKFB3. Phosphorylation by AMPK stimulates activity. As to expression, heart.

It catalyses the reaction beta-D-fructose 2,6-bisphosphate + H2O = beta-D-fructose 6-phosphate + phosphate. The catalysed reaction is beta-D-fructose 6-phosphate + ATP = beta-D-fructose 2,6-bisphosphate + ADP + H(+). Phosphorylation results in the activation of the kinase activity. Synthesis and degradation of fructose 2,6-bisphosphate. In Homo sapiens (Human), this protein is 6-phosphofructo-2-kinase/fructose-2,6-bisphosphatase 2.